Reading from the N-terminus, the 454-residue chain is Bifunctional protein GlmU (454 aa).

The tract at residues 1-225 (MNIVILAAGM…IWETLGVNSK (225 aa)) is pyrophosphorylase. Residues 6-9 (LAAG), Lys20, Gln71, 76-77 (GT), 98-100 (YGD), Gly135, Glu150, Asn165, and Asn223 contribute to the UDP-N-acetyl-alpha-D-glucosamine site. Asp100 is a binding site for Mg(2+). Position 223 (Asn223) interacts with Mg(2+). Positions 226–246 (LQLAEVERIHQGNQARRLLEA) are linker. Residues 247–454 (GVTLLDPARI…WQRPVKQPKK (208 aa)) form an N-acetyltransferase region. 2 residues coordinate UDP-N-acetyl-alpha-D-glucosamine: Arg329 and Lys347. The active-site Proton acceptor is His359. UDP-N-acetyl-alpha-D-glucosamine-binding residues include Tyr362 and Asn373. Acetyl-CoA-binding positions include Ala376, 382 to 383 (NY), Ser401, Ala419, and Arg436.

It in the N-terminal section; belongs to the N-acetylglucosamine-1-phosphate uridyltransferase family. The protein in the C-terminal section; belongs to the transferase hexapeptide repeat family. In terms of assembly, homotrimer. Mg(2+) serves as cofactor.

The protein localises to the cytoplasm. The enzyme catalyses alpha-D-glucosamine 1-phosphate + acetyl-CoA = N-acetyl-alpha-D-glucosamine 1-phosphate + CoA + H(+). It catalyses the reaction N-acetyl-alpha-D-glucosamine 1-phosphate + UTP + H(+) = UDP-N-acetyl-alpha-D-glucosamine + diphosphate. The protein operates within nucleotide-sugar biosynthesis; UDP-N-acetyl-alpha-D-glucosamine biosynthesis; N-acetyl-alpha-D-glucosamine 1-phosphate from alpha-D-glucosamine 6-phosphate (route II): step 2/2. Its pathway is nucleotide-sugar biosynthesis; UDP-N-acetyl-alpha-D-glucosamine biosynthesis; UDP-N-acetyl-alpha-D-glucosamine from N-acetyl-alpha-D-glucosamine 1-phosphate: step 1/1. It functions in the pathway bacterial outer membrane biogenesis; LPS lipid A biosynthesis. In terms of biological role, catalyzes the last two sequential reactions in the de novo biosynthetic pathway for UDP-N-acetylglucosamine (UDP-GlcNAc). The C-terminal domain catalyzes the transfer of acetyl group from acetyl coenzyme A to glucosamine-1-phosphate (GlcN-1-P) to produce N-acetylglucosamine-1-phosphate (GlcNAc-1-P), which is converted into UDP-GlcNAc by the transfer of uridine 5-monophosphate (from uridine 5-triphosphate), a reaction catalyzed by the N-terminal domain. The chain is Bifunctional protein GlmU from Cupriavidus necator (strain ATCC 17699 / DSM 428 / KCTC 22496 / NCIMB 10442 / H16 / Stanier 337) (Ralstonia eutropha).